The chain runs to 805 residues: Phenylalanine--tRNA ligase beta subunit (805 aa).

The 117-residue stretch at 39–155 (VKVLGAFRIC…EDAPMGMRFI (117 aa)) folds into the tRNA-binding domain. The B5 domain maps to 408-479 (DTSRAYRFDP…RVASLTKLQG (72 aa)). Positions 457, 463, 466, and 467 each coordinate Mg(2+). The FDX-ACB domain maps to 707 to 804 (SDLQAVERDF…VAKATGATLR (98 aa)).

Belongs to the phenylalanyl-tRNA synthetase beta subunit family. Type 1 subfamily. As to quaternary structure, tetramer of two alpha and two beta subunits. Mg(2+) serves as cofactor.

It is found in the cytoplasm. It carries out the reaction tRNA(Phe) + L-phenylalanine + ATP = L-phenylalanyl-tRNA(Phe) + AMP + diphosphate + H(+). This is Phenylalanine--tRNA ligase beta subunit from Cereibacter sphaeroides (strain ATCC 17023 / DSM 158 / JCM 6121 / CCUG 31486 / LMG 2827 / NBRC 12203 / NCIMB 8253 / ATH 2.4.1.) (Rhodobacter sphaeroides).